The following is an 855-amino-acid chain: DNA polymerase (855 aa).

Residues 107-332 form the 3'-5' exonuclease domain; sequence KPEMKPVFDA…LHNFFLPKIE (226 aa). The tract at residues 333 to 833 is polymerase; that stretch reads KNEKLCSLYY…MDKEHPDHSK (501 aa).

Belongs to the DNA polymerase type-A family. As to quaternary structure, single-chain monomer with multiple functions.

It catalyses the reaction DNA(n) + a 2'-deoxyribonucleoside 5'-triphosphate = DNA(n+1) + diphosphate. Its function is as follows. Replicates the viral genomic DNA. This polymerase possesses two enzymatic activities: DNA synthesis (polymerase) and an exonucleolytic activity that degrades single-stranded DNA in the 3'-5' direction for proofreading purpose. The DNA synthesis very likely occurs by strand displacement. In Escherichia phage T5 (Enterobacteria phage T5), this protein is DNA polymerase.